A 511-amino-acid polypeptide reads, in one-letter code: MSKKPVALIILDGFALRDETYGNAVAQANKPNFDRYWNEYPHTTLKACGEAVGLPEGQMGNSEVGHLNIGAGRIVYQSLTRINIAIREGEFDRNETFLAAMNHVKQHGTSLHLFGLLSDGGVHSHIHHLYALLRLAAKEGVKRVYIHGFLDGRDVGPQTAPQYIKELQEKIKEYGVGEIATLSGRYYSMDRDKRWDRVEKAYRAMVYGEGPTYRDPLECIEDSYKHGIYDEFVLPSVIVREDGRPVATIQDNDAIIFYNFRPDRAIQISNTFTNEDFREFDRGPKHPKHLFFVCLTHFSETVKGYVAFKPTNLDNTIGEVLSQHGLRQLRIAETEKYPHVTFFMSGGREEKFPGEDRILINSPKVPTYDLKPEMSAYEVTDALLKEIEADKYDAIILNYANPDMVGHSGKLEPTIKAVEAVDECLGKVVDAILAKGGIAIITADHGNADEVLTPDGKPQTAHTTNPVPVIVTKKGIKLRDGGILGDLAPTMLDLLGLPQPKEMTGKSLIVK.

D12 is a Mn(2+) binding site. The residue at position 36 (Y36) is a Phosphotyrosine. Position 62 (S62) interacts with Mn(2+). The active-site Phosphoserine intermediate is S62. Substrate contacts are provided by residues H123, 153-154 (RD), R185, R191, 261-264 (RPDR), and K336. Mn(2+)-binding residues include D403, H407, D444, H445, and H462.

Belongs to the BPG-independent phosphoglycerate mutase family. As to quaternary structure, monomer. Mn(2+) serves as cofactor.

The enzyme catalyses (2R)-2-phosphoglycerate = (2R)-3-phosphoglycerate. Its pathway is carbohydrate degradation; glycolysis; pyruvate from D-glyceraldehyde 3-phosphate: step 3/5. Could be inhibited during sporulation by acidification of the forespore, thus allowing accumulation of the spore's large depot of 3-phosphoglyceric acid. Functionally, essential for rapid growth and for sporulation. Catalyzes the interconversion of 2-phosphoglycerate (2-PGA) and 3-phosphoglycerate (3-PGA). The chain is 2,3-bisphosphoglycerate-independent phosphoglycerate mutase from Geobacillus stearothermophilus (Bacillus stearothermophilus).